Reading from the N-terminus, the 173-residue chain is 2-C-methyl-D-erythritol 2,4-cyclodiphosphate synthase (173 aa).

Positions 17 and 19 each coordinate a divalent metal cation. 4-CDP-2-C-methyl-D-erythritol 2-phosphate-binding positions include aspartate 17–histidine 19 and histidine 49–serine 50. Histidine 57 provides a ligand contact to a divalent metal cation. 4-CDP-2-C-methyl-D-erythritol 2-phosphate contacts are provided by residues phenylalanine 76 to aspartate 80, threonine 147 to glutamate 150, phenylalanine 154, and arginine 157.

The protein belongs to the IspF family. In terms of assembly, homotrimer. Requires a divalent metal cation as cofactor.

It carries out the reaction 4-CDP-2-C-methyl-D-erythritol 2-phosphate = 2-C-methyl-D-erythritol 2,4-cyclic diphosphate + CMP. The protein operates within isoprenoid biosynthesis; isopentenyl diphosphate biosynthesis via DXP pathway; isopentenyl diphosphate from 1-deoxy-D-xylulose 5-phosphate: step 4/6. Involved in the biosynthesis of isopentenyl diphosphate (IPP) and dimethylallyl diphosphate (DMAPP), two major building blocks of isoprenoid compounds. Catalyzes the conversion of 4-diphosphocytidyl-2-C-methyl-D-erythritol 2-phosphate (CDP-ME2P) to 2-C-methyl-D-erythritol 2,4-cyclodiphosphate (ME-CPP) with a corresponding release of cytidine 5-monophosphate (CMP). This Ehrlichia chaffeensis (strain ATCC CRL-10679 / Arkansas) protein is 2-C-methyl-D-erythritol 2,4-cyclodiphosphate synthase.